Here is a 102-residue protein sequence, read N- to C-terminus: Large ribosomal subunit protein uL24 (102 aa).

Belongs to the universal ribosomal protein uL24 family. In terms of assembly, part of the 50S ribosomal subunit.

One of two assembly initiator proteins, it binds directly to the 5'-end of the 23S rRNA, where it nucleates assembly of the 50S subunit. Its function is as follows. One of the proteins that surrounds the polypeptide exit tunnel on the outside of the subunit. This chain is Large ribosomal subunit protein uL24, found in Lysinibacillus sphaericus (strain C3-41).